An 87-amino-acid chain; its full sequence is HssA/B-like protein 56 (87 aa).

The protein belongs to the hssA/B family.

The polypeptide is HssA/B-like protein 56 (hssl56) (Dictyostelium discoideum (Social amoeba)).